Consider the following 572-residue polypeptide: Proline--tRNA ligase (572 aa).

It belongs to the class-II aminoacyl-tRNA synthetase family. ProS type 1 subfamily. As to quaternary structure, homodimer.

It localises to the cytoplasm. The catalysed reaction is tRNA(Pro) + L-proline + ATP = L-prolyl-tRNA(Pro) + AMP + diphosphate. Functionally, catalyzes the attachment of proline to tRNA(Pro) in a two-step reaction: proline is first activated by ATP to form Pro-AMP and then transferred to the acceptor end of tRNA(Pro). As ProRS can inadvertently accommodate and process non-cognate amino acids such as alanine and cysteine, to avoid such errors it has two additional distinct editing activities against alanine. One activity is designated as 'pretransfer' editing and involves the tRNA(Pro)-independent hydrolysis of activated Ala-AMP. The other activity is designated 'posttransfer' editing and involves deacylation of mischarged Ala-tRNA(Pro). The misacylated Cys-tRNA(Pro) is not edited by ProRS. This Haemophilus influenzae (strain 86-028NP) protein is Proline--tRNA ligase.